We begin with the raw amino-acid sequence, 308 residues long: General transcription factor IIH subunit 3 (308 aa).

The segment at 268-285 (CSVCLSIFCNFSPICTTC) adopts a C4-type zinc-finger fold.

It belongs to the TFB4 family. As to quaternary structure, part of a TFIID-containing RNA polymerase II pre-initiation complex that is composed of TBP and at least GTF2A1, GTF2A2, GTF2E1, GTF2E2, GTF2F1, GTF2H2, GTF2H3, GTF2H4, GTF2H5, GTF2B, TCEA1, ERCC2, ERCC3, TAF1, TAF2, TAF3, TAF4, TAF5, TAF6, TAF7, TAF8, TAF9, TAF10, TAF11, TAF12 and TAF13. Component of the 7-subunit TFIIH core complex composed of XPB/ERCC3, XPD/ERCC2, GTF2H1, GTF2H2, GTF2H3, GTF2H4 and GTF2H5, which is active in NER. The core complex associates with the 3-subunit CDK-activating kinase (CAK) module composed of CCNH/cyclin H, CDK7 and MNAT1 to form the 10-subunit holoenzyme (holo-TFIIH) active in transcription. Interacts with RARA; the interaction requires prior phosphorylation of RARA on 'Ser-369' which then enhances interaction of RARA with CDK7.

It localises to the nucleus. Its function is as follows. Component of the general transcription and DNA repair factor IIH (TFIIH) core complex, which is involved in general and transcription-coupled nucleotide excision repair (NER) of damaged DNA and, when complexed to CAK, in RNA transcription by RNA polymerase II. In NER, TFIIH acts by opening DNA around the lesion to allow the excision of the damaged oligonucleotide and its replacement by a new DNA fragment. In transcription, TFIIH has an essential role in transcription initiation. When the pre-initiation complex (PIC) has been established, TFIIH is required for promoter opening and promoter escape. Phosphorylation of the C-terminal tail (CTD) of the largest subunit of RNA polymerase II by the kinase module CAK controls the initiation of transcription. This is General transcription factor IIH subunit 3 (GTF2H3) from Homo sapiens (Human).